A 65-amino-acid chain; its full sequence is Large ribosomal subunit protein uL29 (65 aa).

It belongs to the universal ribosomal protein uL29 family.

The chain is Large ribosomal subunit protein uL29 from Dehalococcoides mccartyi (strain ATCC BAA-2266 / KCTC 15142 / 195) (Dehalococcoides ethenogenes (strain 195)).